The sequence spans 298 residues: Probable GTP 3',8-cyclase (298 aa).

In terms of domain architecture, Radical SAM core spans 4–230 (KFGREIRSLR…RKKYIVDGLE (227 aa)). Arginine 13 provides a ligand contact to GTP. Positions 20 and 24 each coordinate [4Fe-4S] cluster. Tyrosine 26 is a binding site for S-adenosyl-L-methionine. Cysteine 27 contacts [4Fe-4S] cluster. Position 61 (lysine 61) interacts with GTP. Glycine 65 is an S-adenosyl-L-methionine binding site. Threonine 91 provides a ligand contact to GTP. Residue serine 115 coordinates S-adenosyl-L-methionine. GTP is bound at residue lysine 152. [4Fe-4S] cluster is bound by residues cysteine 243 and cysteine 246. 248–250 (RIR) contacts GTP. Cysteine 260 serves as a coordination point for [4Fe-4S] cluster.

Belongs to the radical SAM superfamily. MoaA family. Requires [4Fe-4S] cluster as cofactor.

The enzyme catalyses GTP + AH2 + S-adenosyl-L-methionine = (8S)-3',8-cyclo-7,8-dihydroguanosine 5'-triphosphate + 5'-deoxyadenosine + L-methionine + A + H(+). The protein operates within cofactor biosynthesis; molybdopterin biosynthesis. In terms of biological role, catalyzes the cyclization of GTP to (8S)-3',8-cyclo-7,8-dihydroguanosine 5'-triphosphate. The chain is Probable GTP 3',8-cyclase from Methanocaldococcus jannaschii (strain ATCC 43067 / DSM 2661 / JAL-1 / JCM 10045 / NBRC 100440) (Methanococcus jannaschii).